A 192-amino-acid polypeptide reads, in one-letter code: A-type ATP synthase subunit E (192 aa).

The protein belongs to the V-ATPase E subunit family. Has multiple subunits with at least A(3), B(3), C, D, E, F, H, I and proteolipid K(x).

The protein resides in the cell membrane. Component of the A-type ATP synthase that produces ATP from ADP in the presence of a proton gradient across the membrane. The polypeptide is A-type ATP synthase subunit E (Halorubrum lacusprofundi (strain ATCC 49239 / DSM 5036 / JCM 8891 / ACAM 34)).